A 189-amino-acid polypeptide reads, in one-letter code: Xanthine phosphoribosyltransferase (189 aa).

Xanthine-binding residues include leucine 20 and asparagine 27. Alanine 128–alanine 132 contributes to the 5-phospho-alpha-D-ribose 1-diphosphate binding site. Lysine 156 contacts xanthine.

It belongs to the purine/pyrimidine phosphoribosyltransferase family. Xpt subfamily. As to quaternary structure, homodimer.

Its subcellular location is the cytoplasm. The catalysed reaction is XMP + diphosphate = xanthine + 5-phospho-alpha-D-ribose 1-diphosphate. Its pathway is purine metabolism; XMP biosynthesis via salvage pathway; XMP from xanthine: step 1/1. In terms of biological role, converts the preformed base xanthine, a product of nucleic acid breakdown, to xanthosine 5'-monophosphate (XMP), so it can be reused for RNA or DNA synthesis. The protein is Xanthine phosphoribosyltransferase of Pseudomonas syringae pv. syringae (strain B728a).